Consider the following 425-residue polypeptide: Enolase (425 aa).

Glutamine 164 contacts (2R)-2-phosphoglycerate. Glutamate 208 serves as the catalytic Proton donor. Aspartate 243, glutamate 286, and aspartate 312 together coordinate Mg(2+). The (2R)-2-phosphoglycerate site is built by lysine 337, arginine 366, serine 367, and lysine 388. The Proton acceptor role is filled by lysine 337.

It belongs to the enolase family. Mg(2+) is required as a cofactor.

The protein resides in the cytoplasm. The protein localises to the secreted. It is found in the cell surface. It catalyses the reaction (2R)-2-phosphoglycerate = phosphoenolpyruvate + H2O. The protein operates within carbohydrate degradation; glycolysis; pyruvate from D-glyceraldehyde 3-phosphate: step 4/5. Catalyzes the reversible conversion of 2-phosphoglycerate (2-PG) into phosphoenolpyruvate (PEP). It is essential for the degradation of carbohydrates via glycolysis. This is Enolase from Methanococcus aeolicus (strain ATCC BAA-1280 / DSM 17508 / OCM 812 / Nankai-3).